The primary structure comprises 507 residues: Histidine ammonia-lyase (507 aa).

The segment at residues 142–144 (ASG) is a cross-link (5-imidazolinone (Ala-Gly)). Ser143 bears the 2,3-didehydroalanine (Ser) mark.

The protein belongs to the PAL/histidase family. Contains an active site 4-methylidene-imidazol-5-one (MIO), which is formed autocatalytically by cyclization and dehydration of residues Ala-Ser-Gly.

The protein localises to the cytoplasm. The enzyme catalyses L-histidine = trans-urocanate + NH4(+). It participates in amino-acid degradation; L-histidine degradation into L-glutamate; N-formimidoyl-L-glutamate from L-histidine: step 1/3. The polypeptide is Histidine ammonia-lyase (Maricaulis maris (strain MCS10) (Caulobacter maris)).